The sequence spans 192 residues: Protein A16 (192 aa).

Positions 1-22 (MLLANTAAAVLLLIVCIGASVG) are cleaved as a signal peptide. Residues 71 to 186 (KNKKFTIGTL…CLNPLNIFPY (116 aa)) enclose the C-type lectin domain. Cysteines 163 and 177 form a disulfide.

In terms of tissue distribution, expressed in the gut of adults.

The sequence is that of Protein A16 (CTL3) from Anopheles gambiae (African malaria mosquito).